Consider the following 308-residue polypeptide: Methionyl-tRNA formyltransferase (308 aa).

A (6S)-5,6,7,8-tetrahydrofolate-binding site is contributed by 110-113 (SLLP).

This sequence belongs to the Fmt family.

The catalysed reaction is L-methionyl-tRNA(fMet) + (6R)-10-formyltetrahydrofolate = N-formyl-L-methionyl-tRNA(fMet) + (6S)-5,6,7,8-tetrahydrofolate + H(+). Attaches a formyl group to the free amino group of methionyl-tRNA(fMet). The formyl group appears to play a dual role in the initiator identity of N-formylmethionyl-tRNA by promoting its recognition by IF2 and preventing the misappropriation of this tRNA by the elongation apparatus. This Neisseria gonorrhoeae (strain ATCC 700825 / FA 1090) protein is Methionyl-tRNA formyltransferase.